The sequence spans 273 residues: Nicotinamide N-methyltransferase (273 aa).

S-adenosyl-L-methionine contacts are provided by residues Y35, Y40, 74–75 (GA), Y80, D96, N101, and 152–153 (NV).

It belongs to the class I-like SAM-binding methyltransferase superfamily. NNMT/PNMT/TEMT family.

The enzyme catalyses nicotinamide + S-adenosyl-L-methionine = 1-methylnicotinamide + S-adenosyl-L-homocysteine. Catalyzes the N-methylation of nicotinamide and other pyridines to form pyridinium ions. Involved in regulation of lifespan extension downstream of the sirtuin sir-2.1, probably through its role in nicotinic acid metabolism. In Caenorhabditis elegans, this protein is Nicotinamide N-methyltransferase.